Here is a 176-residue protein sequence, read N- to C-terminus: Inner membrane-spanning protein YciB (176 aa).

Transmembrane regions (helical) follow at residues 3–23, 24–44, 49–69, 81–101, 119–139, and 149–169; these read FLFD…WGIF, TATA…AFRH, TMLW…LVLH, LYWL…NNLI, LNVA…YVVH, and FKLF…SLWL.

This sequence belongs to the YciB family.

The protein resides in the cell inner membrane. Its function is as follows. Plays a role in cell envelope biogenesis, maintenance of cell envelope integrity and membrane homeostasis. In Burkholderia ambifaria (strain MC40-6), this protein is Inner membrane-spanning protein YciB.